Consider the following 222-residue polypeptide: Ras-related protein Rab11D (222 aa).

Position 22–29 (22–29 (GDSAVGKS)) interacts with GTP. The Effector region motif lies at 44-52 (SKATIGVEF). GTP-binding positions include 70–74 (DTAGQ) and 128–131 (NKTD). Residues C219 and C220 are each lipidated (S-geranylgeranyl cysteine).

This sequence belongs to the small GTPase superfamily. Rab family.

It is found in the cell membrane. This Nicotiana tabacum (Common tobacco) protein is Ras-related protein Rab11D (RAB11D).